A 594-amino-acid chain; its full sequence is Trehalase (594 aa).

An N-terminal signal peptide occupies residues 1–27; it reads MDFLNKKIQKILFICILSFLIVNLTKS. 4 N-linked (GlcNAc...) asparagine glycosylation sites follow: N56, N70, N97, and N166. Substrate is bound by residues R190, 197–198, and N234; that span reads WD. N242 carries an N-linked (GlcNAc...) asparagine glycan. 243–245 provides a ligand contact to substrate; the sequence is RSQ. N-linked (GlcNAc...) asparagine glycosylation is found at N261 and N305. Substrate is bound by residues 312-314 and G346; that span reads RPE. D348 serves as the catalytic Proton donor/acceptor. 4 N-linked (GlcNAc...) asparagine glycosylation sites follow: N361, N395, N513, and N537. The active-site Proton donor/acceptor is the E549. E564 contributes to the substrate binding site.

Belongs to the glycosyl hydrolase 37 family.

The catalysed reaction is alpha,alpha-trehalose + H2O = alpha-D-glucose + beta-D-glucose. In Dictyostelium discoideum (Social amoeba), this protein is Trehalase (treh).